The primary structure comprises 163 residues: Nucleotide-binding protein LA_3406 (163 aa).

It belongs to the YajQ family.

Nucleotide-binding protein. This is Nucleotide-binding protein LA_3406 from Leptospira interrogans serogroup Icterohaemorrhagiae serovar Lai (strain 56601).